Consider the following 371-residue polypeptide: Carnitine monooxygenase oxygenase subunit (371 aa).

In terms of domain architecture, Rieske spans 44 to 152 (WICVAHGSEL…VEEYAGFVFI (109 aa)). Cysteine 86, histidine 88, cysteine 106, and histidine 109 together coordinate [2Fe-2S] cluster. Fe cation-binding residues include histidine 208, histidine 213, and aspartate 323.

It belongs to the bacterial ring-hydroxylating dioxygenase alpha subunit family. CntA subfamily. In terms of assembly, composed of an oxygenase subunit and a reductase subunit. The cofactor is [2Fe-2S] cluster. It depends on Fe cation as a cofactor.

The catalysed reaction is (R)-carnitine + NADH + O2 + H(+) = (3R)-3-hydroxy-4-oxobutanoate + trimethylamine + NAD(+) + H2O. It catalyses the reaction (R)-carnitine + NADPH + O2 + H(+) = (3R)-3-hydroxy-4-oxobutanoate + trimethylamine + NADP(+) + H2O. Its pathway is amine and polyamine metabolism; carnitine metabolism. Inhibited by EDTA. Functionally, converts carnitine to trimethylamine and malic semialdehyde. Acts on both enantiomers. This is Carnitine monooxygenase oxygenase subunit from Acinetobacter pittii (strain PHEA-2).